A 369-amino-acid chain; its full sequence is Biglycan (369 aa).

Positions 1 to 16 (MWPLWLVASLLALSQA) are cleaved as a signal peptide. Residues 17–37 (LPFEQKGFWDFTLDDGLPMLN) constitute a propeptide that is removed on maturation. Residues Ser42 and Ser48 are each glycosylated (O-linked (Xyl...) (glycosaminoglycan) serine). Cystine bridges form between Cys64–Cys70 and Cys68–Cys77. LRR repeat units lie at residues 83-103 (KAVP…NNDI), 104-127 (SELR…NNKI), 128-151 (SKIH…KNHL), 152-172 (VEIP…DNRI), 173-196 (RKVP…GNPL), 197-221 (ENSG…EAKL), 222-242 (TGIP…HNKI), 243-266 (QAIE…HNQI), 267-290 (RMIE…NNKL), 291-313 (SRVP…TNNI), 314-343 (TKVG…NNPV), and 344-369 (PYWE…NYKK). 2 N-linked (GlcNAc...) asparagine glycosylation sites follow: Asn271 and Asn312. Cysteines 322 and 355 form a disulfide.

This sequence belongs to the small leucine-rich proteoglycan (SLRP) family. SLRP class I subfamily. As to quaternary structure, homodimer. Forms a ternary complex with MFAP2 and ELN. The two attached glycosaminoglycan chains can be either chondroitin sulfate or dermatan sulfate.

It localises to the secreted. Its subcellular location is the extracellular space. The protein resides in the extracellular matrix. May be involved in collagen fiber assembly. This chain is Biglycan (BGN), found in Canis lupus familiaris (Dog).